The following is a 221-amino-acid chain: Octanoyltransferase (221 aa).

The 179-residue stretch at 40 to 218 folds into the BPL/LPL catalytic domain; it reads PNLEDVLILL…AFAEVFGLEL (179 aa). Substrate contacts are provided by residues 82–89, 149–151, and 162–164; these read RGGEVTYH, AIG, and GFA. The Acyl-thioester intermediate role is filled by Cys-180.

This sequence belongs to the LipB family.

The protein localises to the cytoplasm. It carries out the reaction octanoyl-[ACP] + L-lysyl-[protein] = N(6)-octanoyl-L-lysyl-[protein] + holo-[ACP] + H(+). The protein operates within protein modification; protein lipoylation via endogenous pathway; protein N(6)-(lipoyl)lysine from octanoyl-[acyl-carrier-protein]: step 1/2. Catalyzes the transfer of endogenously produced octanoic acid from octanoyl-acyl-carrier-protein onto the lipoyl domains of lipoate-dependent enzymes. Lipoyl-ACP can also act as a substrate although octanoyl-ACP is likely to be the physiological substrate. In Nostoc sp. (strain PCC 7120 / SAG 25.82 / UTEX 2576), this protein is Octanoyltransferase.